Here is a 715-residue protein sequence, read N- to C-terminus: Inducible lysine decarboxylase (715 aa).

N6-(pyridoxal phosphate)lysine is present on Lys-367.

Belongs to the Orn/Lys/Arg decarboxylase class-I family. As to quaternary structure, homodecamer. Interacts with RavA. The cofactor is pyridoxal 5'-phosphate.

The protein localises to the cytoplasm. It catalyses the reaction L-lysine + H(+) = cadaverine + CO2. This chain is Inducible lysine decarboxylase (cadA), found in Escherichia coli O157:H7.